Consider the following 206-residue polypeptide: Large ribosomal subunit protein uL13x (206 aa).

It belongs to the universal ribosomal protein uL13 family.

The chain is Large ribosomal subunit protein uL13x (RPL13AC) from Arabidopsis thaliana (Mouse-ear cress).